Here is a 383-residue protein sequence, read N- to C-terminus: 8-amino-7-oxononanoate synthase (383 aa).

Arg-21 lines the substrate pocket. Position 108–109 (108–109) interacts with pyridoxal 5'-phosphate; it reads GF. His-133 contacts substrate. Positions 179, 207, and 233 each coordinate pyridoxal 5'-phosphate. Position 236 is an N6-(pyridoxal phosphate)lysine (Lys-236). Thr-350 lines the substrate pocket.

The protein belongs to the class-II pyridoxal-phosphate-dependent aminotransferase family. BioF subfamily. Homodimer. Requires pyridoxal 5'-phosphate as cofactor.

The catalysed reaction is 6-carboxyhexanoyl-[ACP] + L-alanine + H(+) = (8S)-8-amino-7-oxononanoate + holo-[ACP] + CO2. The protein operates within cofactor biosynthesis; biotin biosynthesis. Catalyzes the decarboxylative condensation of pimeloyl-[acyl-carrier protein] and L-alanine to produce 8-amino-7-oxononanoate (AON), [acyl-carrier protein], and carbon dioxide. The sequence is that of 8-amino-7-oxononanoate synthase from Yersinia enterocolitica serotype O:8 / biotype 1B (strain NCTC 13174 / 8081).